The following is a 424-amino-acid chain: MEKFRVHGPFTLSGTVDISGAKNAALPILFAAVLATEPVTLTNVPDLKDVDTTFKILRKLGVVVERDESGAVQIDASKIDHYVAPYELVKTMRASIWALAPLVARFHEGQVSLPGGCTIGARPVDMHISSLEKMGALIELDEGYVKATSNGRLHGARIYMDKVSVGATLSVMMAATLAEGTTTIENAAREPEIVDTALFLNAMGAKISGAGTDTITIEGVERLTGCQHRIVADRIETGTFLVAAAVSGGKITCRGTKADTLEAVIEKLREAGMEVTVTEDTITLDSKGQRPKAVNIRTMPHPGFPTDMQAQFTLLNVVAEGTSRITETIFENRFMHIPELNRMGAKGEIEGNTAICHGVEKLKSAEVMATDLRASISLVLAGCIASGETIVDRIYHIDRGYEHIEDKLRGIGAKIERFSTKFEE.

22–23 contacts phosphoenolpyruvate; the sequence is KN. Arg-93 is a binding site for UDP-N-acetyl-alpha-D-glucosamine. Cys-117 acts as the Proton donor in catalysis. Cys-117 carries the 2-(S-cysteinyl)pyruvic acid O-phosphothioketal modification. UDP-N-acetyl-alpha-D-glucosamine-binding positions include 162–165, Asp-307, and Ile-329; that span reads KVSV.

Belongs to the EPSP synthase family. MurA subfamily.

The protein resides in the cytoplasm. The catalysed reaction is phosphoenolpyruvate + UDP-N-acetyl-alpha-D-glucosamine = UDP-N-acetyl-3-O-(1-carboxyvinyl)-alpha-D-glucosamine + phosphate. It functions in the pathway cell wall biogenesis; peptidoglycan biosynthesis. Functionally, cell wall formation. Adds enolpyruvyl to UDP-N-acetylglucosamine. The sequence is that of UDP-N-acetylglucosamine 1-carboxyvinyltransferase from Actinobacillus pleuropneumoniae serotype 7 (strain AP76).